The chain runs to 373 residues: uncharacterized protein (373 aa).

This is an uncharacterized protein from Thermoproteus tenax.